The following is a 471-amino-acid chain: Kynurenine 3-monooxygenase (471 aa).

Residues Val-19, 37–40 (YESR), and Ala-57 each bind FAD. L-kynurenine-binding residues include Arg-85 and Tyr-99. Residues Arg-111, Leu-136, Thr-172, Asp-304, and 317 to 318 (MN) each bind FAD. L-kynurenine contacts are provided by Asn-363 and Tyr-398. 2 helical membrane passes run 385–404 (CLHT…VTFS) and 425–445 (ALFF…TGPT).

The protein belongs to the aromatic-ring hydroxylase family. KMO subfamily. It depends on FAD as a cofactor.

Its subcellular location is the mitochondrion outer membrane. It carries out the reaction L-kynurenine + NADPH + O2 + H(+) = 3-hydroxy-L-kynurenine + NADP(+) + H2O. It participates in cofactor biosynthesis; NAD(+) biosynthesis; quinolinate from L-kynurenine: step 1/3. Catalyzes the hydroxylation of L-kynurenine (L-Kyn) to form 3-hydroxy-L-kynurenine (L-3OHKyn). Required for synthesis of quinolinic acid, a neurotoxic NMDA receptor antagonist and potential endogenous inhibitor of NMDA receptor signaling in axonal targeting, synaptogenesis and apoptosis during brain development. Quinolinic acid may also affect NMDA receptor signaling in pancreatic beta cells, osteoblasts, myocardial cells, and the gastrointestinal tract. The polypeptide is Kynurenine 3-monooxygenase (Sus scrofa (Pig)).